We begin with the raw amino-acid sequence, 689 residues long: Protein asunder (689 aa).

A coiled-coil region spans residues 521 to 550; the sequence is NGARLKLSKAKDQYRLLYRELEQLIQLNAT. Disordered stretches follow at residues 591 to 619 and 669 to 689; these read SPER…SKRR and KDAV…SVRS. The segment covering 599 to 614 has biased composition (low complexity); the sequence is SSVGASGSSNSNSLLK. The Nuclear localization signal (NLS) motif lies at 613–619; sequence LKASKRR.

The protein belongs to the Integrator subunit 13 family. Belongs to the multiprotein complex Integrator, at least composed of IntS1, IntS2, IntS3, IntS4, omd/IntS5, IntS6, defl/IntS7, IntS8, IntS9, IntS10, IntS11, IntS12, asun/IntS13, IntS14 and IntS15. The core complex associates with protein phosphatase 2A subunits mts/PP2A and Pp2A-29B, to form the Integrator-PP2A (INTAC) complex. In terms of processing, phosphorylated.

The protein localises to the nucleus. Its subcellular location is the cytoplasm. It is found in the perinuclear region. Its function is as follows. Component of the integrator complex, a multiprotein complex that terminates RNA polymerase II (Pol II) transcription in the promoter-proximal region of genes. The integrator complex provides a quality checkpoint during transcription elongation by driving premature transcription termination of transcripts that are unfavorably configured for transcriptional elongation: the complex terminates transcription by (1) catalyzing dephosphorylation of the C-terminal domain (CTD) of Pol II subunit Polr2A/Rbp1 and Spt5, and (2) degrading the exiting nascent RNA transcript via endonuclease activity. The integrator complex is also involved in the 3'-end processing of the U7 snRNA, and also the spliceosomal snRNAs U1, U2, U4 and U5. The sequence is that of Protein asunder (asun) from Drosophila simulans (Fruit fly).